The sequence spans 728 residues: tRNA (guanine(27)-N(2))-dimethyltransferase (728 aa).

Residues 1–10 (MENMAEEELL) are compositionally biased toward acidic residues. 2 disordered regions span residues 1 to 78 (MENM…SKRH) and 98 to 118 (DVDS…SQTC). Position 23 is a phosphothreonine (threonine 23). Residues 23–33 (TPAPDSAPVPA) show a composition bias toward pro residues. A compositionally biased stretch (low complexity) spans 34–46 (PAADTALDSAPTP). A compositionally biased stretch (pro residues) spans 47–61 (DSDPAPALAPAPAPA). Serine 63 carries the phosphoserine modification. The segment covering 101–118 (SASSLNSDNPGTENSQTC) has biased composition (polar residues). The Nucleolar localization signal signature appears at 132-136 (HKLRR). The C2H2-type zinc-finger motif lies at 181 to 203 (YHCIICSATITRRTDMLGHVKRH). The Trm1 methyltransferase domain maps to 224–683 (EILKETDTDI…APLMQFKSIL (460 aa)). S-adenosyl-L-methionine contacts are provided by arginine 257, aspartate 304, aspartate 352, and alanine 353. Residues cysteine 483, cysteine 486, cysteine 508, and cysteine 510 each coordinate Zn(2+). Residue lysine 580 forms a Glycyl lysine isopeptide (Lys-Gly) (interchain with G-Cter in SUMO2) linkage. Serine 607 is modified (phosphoserine). Residues 693–728 (GAQSEGQMPPAAEDTVTDRVEMSVSDKAEASGCRRW) form a disordered region. The span at 708-721 (VTDRVEMSVSDKAE) shows a compositional bias: basic and acidic residues.

It belongs to the class I-like SAM-binding methyltransferase superfamily. Trm1 family. In terms of tissue distribution, expressed in various neuronal structures during embryonic development, including spinal ganglia, trigeminal nerve and ganglion, olfactory and nasopharyngeal epithelium, nuclei of the metencephalon, thalamus and medulla oblongata. Also expressed in lung, esophagus, epiglottis, ependyma, vertebral column, spinal cord and brown adipose tissue. Expression persists in the adult brain with dynamically changing patterns in cortex and cerebellum.

The protein resides in the nucleus. The protein localises to the nucleolus. It carries out the reaction guanosine(27) in tRNA(Tyr) + 2 S-adenosyl-L-methionine = N(2)-dimethylguanosine(27) in tRNA(Tyr) + 2 S-adenosyl-L-homocysteine + 2 H(+). Functionally, specifically dimethylates a single guanine residue at position 27 of tRNA(Tyr) using S-adenosyl-L-methionine as donor of the methyl groups. Dimethylation at position 27 of tRNA(Tyr) is required for efficient translation of tyrosine codons. Also required to maintain 3-(3-amino-3-carboxypropyl)uridine (acp3U) in the D-loop of several cytoplasmic tRNAs. May play a role in motor coordination and exploratory behavior. This Mus musculus (Mouse) protein is tRNA (guanine(27)-N(2))-dimethyltransferase.